An 83-amino-acid polypeptide reads, in one-letter code: Small ribosomal subunit protein bS16 (83 aa).

It belongs to the bacterial ribosomal protein bS16 family.

The chain is Small ribosomal subunit protein bS16 from Shewanella amazonensis (strain ATCC BAA-1098 / SB2B).